Here is a 293-residue protein sequence, read N- to C-terminus: DNA-directed RNA polymerase III subunit RPC6 (293 aa).

The protein belongs to the eukaryotic RPC34/RPC39 RNA polymerase subunit family. In terms of assembly, component of the RNA polymerase III (Pol III) complex consisting of 17 subunits.

It is found in the nucleus. Its function is as follows. DNA-dependent RNA polymerase catalyzes the transcription of DNA into RNA using the four ribonucleoside triphosphates as substrates. Specific peripheric component of RNA polymerase III which synthesizes small RNAs, such as 5S rRNA and tRNAs. In Drosophila melanogaster (Fruit fly), this protein is DNA-directed RNA polymerase III subunit RPC6.